Consider the following 399-residue polypeptide: Tyrosine--tRNA ligase (399 aa).

Residues 42–51 (PTAPDLHLGH) carry the 'HIGH' region motif. A 'KMSKS' region motif is present at residues 226–230 (KMSKS). K229 lines the ATP pocket. The S4 RNA-binding domain maps to 336–396 (MPIAAVLNKA…GRKAFARITL (61 aa)).

The protein belongs to the class-I aminoacyl-tRNA synthetase family. TyrS type 2 subfamily. As to quaternary structure, homodimer.

The protein resides in the cytoplasm. It carries out the reaction tRNA(Tyr) + L-tyrosine + ATP = L-tyrosyl-tRNA(Tyr) + AMP + diphosphate + H(+). In terms of biological role, catalyzes the attachment of tyrosine to tRNA(Tyr) in a two-step reaction: tyrosine is first activated by ATP to form Tyr-AMP and then transferred to the acceptor end of tRNA(Tyr). The polypeptide is Tyrosine--tRNA ligase (Pseudomonas fluorescens (strain ATCC BAA-477 / NRRL B-23932 / Pf-5)).